A 96-amino-acid chain; its full sequence is uncharacterized protein (96 aa).

Over residues 1 to 18 (MSNVDRYDVHRDGIEKDR) the composition is skewed to basic and acidic residues. The disordered stretch occupies residues 1–96 (MSNVDRYDVH…REQHHQPQKQ (96 aa)). Polar residues predominate over residues 28–46 (QNGQSQSTMDNRPPWNNDT). Basic and acidic residues predominate over residues 70 to 96 (TIDRQQEELTKNWTESLREQHHQPQKQ).

This is an uncharacterized protein from Caenorhabditis elegans.